The sequence spans 311 residues: Pyrimidine-specific ribonucleoside hydrolase RihA (311 aa).

His-240 is a catalytic residue.

It belongs to the IUNH family. RihA subfamily.

Functionally, hydrolyzes with equal efficiency cytidine or uridine to ribose and cytosine or uracil, respectively. The protein is Pyrimidine-specific ribonucleoside hydrolase RihA of Escherichia coli O7:K1 (strain IAI39 / ExPEC).